The primary structure comprises 469 residues: Cytochrome P450 85A1 (469 aa).

A helical membrane pass occupies residues 1–21; that stretch reads MVLVAIGVVVAAAVVVSSLLL. C419 contacts heme.

It belongs to the cytochrome P450 family. Heme is required as a cofactor. In terms of tissue distribution, expressed at low levels in all the tissues, but preferentially in the leaf sheath.

Its subcellular location is the membrane. It catalyses the reaction 6-deoxoteasterone + reduced [NADPH--hemoprotein reductase] + O2 = 6alpha-hydroxyteasterone + oxidized [NADPH--hemoprotein reductase] + H2O + H(+). The catalysed reaction is 6alpha-hydroxytyphasterol + reduced [NADPH--hemoprotein reductase] + O2 = teasterone + oxidized [NADPH--hemoprotein reductase] + 2 H2O + H(+). It carries out the reaction 3-dehydro-6-deoxoteasterone + reduced [NADPH--hemoprotein reductase] + O2 = 3-dehydro-6alpha-hydroxyteasterone + oxidized [NADPH--hemoprotein reductase] + H2O + H(+). The enzyme catalyses 3-dehydro-6alpha-hydroxyteasterone + reduced [NADPH--hemoprotein reductase] + O2 = 3-dehydroteasterone + oxidized [NADPH--hemoprotein reductase] + 2 H2O + H(+). It catalyses the reaction 6-deoxotyphasterol + reduced [NADPH--hemoprotein reductase] + O2 = 6alpha-hydroxytyphasterol + oxidized [NADPH--hemoprotein reductase] + H2O + H(+). The catalysed reaction is 6alpha-hydroxytyphasterol + reduced [NADPH--hemoprotein reductase] + O2 = typhasterol + oxidized [NADPH--hemoprotein reductase] + 2 H2O + H(+). It carries out the reaction 3-dehydro-6-deoxoteasterone + 2 reduced [NADPH--hemoprotein reductase] + 2 O2 = 3-dehydroteasterone + 2 oxidized [NADPH--hemoprotein reductase] + 3 H2O + 2 H(+). The enzyme catalyses 6-deoxoteasterone + 2 reduced [NADPH--hemoprotein reductase] + 2 O2 = teasterone + 2 oxidized [NADPH--hemoprotein reductase] + 3 H2O + 2 H(+). It catalyses the reaction 6-deoxotyphasterol + 2 reduced [NADPH--hemoprotein reductase] + 2 O2 = typhasterol + 2 oxidized [NADPH--hemoprotein reductase] + 3 H2O + 2 H(+). It functions in the pathway plant hormone biosynthesis; brassinosteroid biosynthesis. In terms of biological role, catalyzes the C6-oxidation step in brassinosteroids biosynthesis. May convert 6-deoxoteasterone (6-deoxoTE) to teasterone (TE), 3-dehydro-6-deoxoteasterone (6-deoxo3DT, 6-deoxo3DHT) to 3-dehydroteasterone (3DT, 3-DHT), and 6-deoxotyphasterol (6-deoxoTY) to typhasterol (TY). Involved in the organization and elongation of the leaf and stem cells. Not able to convert 6-deoxocastasterone (6-deoxoCS) and castasterone (CS) to brassinolide (BL). This chain is Cytochrome P450 85A1, found in Oryza sativa subsp. japonica (Rice).